The following is a 482-amino-acid chain: Argininosuccinate synthase (482 aa).

ATP is bound by residues 17–25 (AFSGGLDTS) and Ala43. Tyr99 lines the L-citrulline pocket. Positions 129 and 131 each coordinate ATP. 3 residues coordinate L-aspartate: Thr131, Asn135, and Asp136. Asn135 serves as a coordination point for L-citrulline. Asp136 is an ATP binding site. L-citrulline is bound by residues Arg139 and Ser192. Residue Asp194 participates in ATP binding. 3 residues coordinate L-citrulline: Thr201, Glu203, and Glu280. The disordered stretch occupies residues 461 to 482 (SRGEATDEETMLDRAAMESGTD).

Belongs to the argininosuccinate synthase family. Type 2 subfamily. In terms of assembly, homotetramer.

The protein localises to the cytoplasm. It carries out the reaction L-citrulline + L-aspartate + ATP = 2-(N(omega)-L-arginino)succinate + AMP + diphosphate + H(+). The protein operates within amino-acid biosynthesis; L-arginine biosynthesis; L-arginine from L-ornithine and carbamoyl phosphate: step 2/3. The polypeptide is Argininosuccinate synthase (argG) (Streptomyces lavendulae).